The primary structure comprises 235 residues: Large ribosomal subunit protein uL1 (235 aa).

The disordered stretch occupies residues 1-22; sequence MSKNSKAYRAAAEKVDRSNPYT.

It belongs to the universal ribosomal protein uL1 family. As to quaternary structure, part of the 50S ribosomal subunit.

Its function is as follows. Binds directly to 23S rRNA. The L1 stalk is quite mobile in the ribosome, and is involved in E site tRNA release. Functionally, protein L1 is also a translational repressor protein, it controls the translation of the L11 operon by binding to its mRNA. The protein is Large ribosomal subunit protein uL1 of Mycobacterium ulcerans (strain Agy99).